The primary structure comprises 856 residues: DNA mismatch repair protein MutS (856 aa).

Position 605–612 (605–612) interacts with ATP; the sequence is GPNMSGKS.

This sequence belongs to the DNA mismatch repair MutS family.

Its function is as follows. This protein is involved in the repair of mismatches in DNA. It is possible that it carries out the mismatch recognition step. This protein has a weak ATPase activity. This is DNA mismatch repair protein MutS from Lysinibacillus sphaericus (strain C3-41).